A 316-amino-acid polypeptide reads, in one-letter code: Nucleoside diphosphate-linked moiety X motif 6 (316 aa).

The Nudix hydrolase domain occupies 141-273; that stretch reads SHQVGVAGAV…TSRVARLLLY (133 aa). A Nudix box motif is present at residues 176-197; the sequence is GLSEPEEDIGDTAVREVFEETG.

It belongs to the Nudix hydrolase family. As to quaternary structure, monomer and homodimer. In terms of tissue distribution, detected in liver, kidney and esophagus (at protein level). Ubiquitous.

The protein localises to the cytoplasm. The protein resides in the nucleus. Its subcellular location is the mitochondrion. Functionally, may contribute to the regulation of cell proliferation. The protein is Nucleoside diphosphate-linked moiety X motif 6 (NUDT6) of Homo sapiens (Human).